Consider the following 423-residue polypeptide: UDP-N-acetylglucosamine 1-carboxyvinyltransferase 2 (423 aa).

23 to 24 (KN) serves as a coordination point for phosphoenolpyruvate. Arg93 is a binding site for UDP-N-acetyl-alpha-D-glucosamine. Cys117 (proton donor) is an active-site residue. Position 117 is a 2-(S-cysteinyl)pyruvic acid O-phosphothioketal (Cys117). UDP-N-acetyl-alpha-D-glucosamine-binding positions include 122 to 126 (RPIDQ), Asp305, and Ile327.

This sequence belongs to the EPSP synthase family. MurA subfamily.

The protein localises to the cytoplasm. The catalysed reaction is phosphoenolpyruvate + UDP-N-acetyl-alpha-D-glucosamine = UDP-N-acetyl-3-O-(1-carboxyvinyl)-alpha-D-glucosamine + phosphate. The protein operates within cell wall biogenesis; peptidoglycan biosynthesis. Functionally, cell wall formation. Adds enolpyruvyl to UDP-N-acetylglucosamine. The chain is UDP-N-acetylglucosamine 1-carboxyvinyltransferase 2 from Listeria innocua serovar 6a (strain ATCC BAA-680 / CLIP 11262).